Consider the following 454-residue polypeptide: GTPase Der (454 aa).

2 consecutive EngA-type G domains span residues 4–167 and 188–363; these read AIVA…SEDK and LELA…ASWQ. GTP is bound by residues 10–17, 56–60, 121–124, 194–201, 241–245, and 306–309; these read GKPNVGKS, DTPGL, NKTE, GRPNCGKS, DTAGV, and NKWD. The 87-residue stretch at 364-450 folds into the KH-like domain; it reads KRVTTGTLNQ…PVRLSFVKGK (87 aa).

Belongs to the TRAFAC class TrmE-Era-EngA-EngB-Septin-like GTPase superfamily. EngA (Der) GTPase family. As to quaternary structure, associates with the 50S ribosomal subunit.

Functionally, GTPase that plays an essential role in the late steps of ribosome biogenesis. This chain is GTPase Der, found in Orientia tsutsugamushi (strain Ikeda) (Rickettsia tsutsugamushi).